A 348-amino-acid polypeptide reads, in one-letter code: Fructose-1,6-bisphosphatase class 1 (348 aa).

Mg(2+) contacts are provided by Glu92, Asp111, Leu113, and Asp114. Substrate contacts are provided by residues 114-117 and Asn204; that span reads DGSS. Glu276 provides a ligand contact to Mg(2+).

It belongs to the FBPase class 1 family. In terms of assembly, homotetramer. Mg(2+) is required as a cofactor.

Its subcellular location is the cytoplasm. The enzyme catalyses beta-D-fructose 1,6-bisphosphate + H2O = beta-D-fructose 6-phosphate + phosphate. The protein operates within carbohydrate biosynthesis; gluconeogenesis. This chain is Fructose-1,6-bisphosphatase class 1, found in Methylorubrum extorquens (strain CM4 / NCIMB 13688) (Methylobacterium extorquens).